The following is a 433-amino-acid chain: MKKLFIQFYLLLFVCFLVMSLLVGLVYKFTAERAGKQSLDDLMNSSLYLMRSELREIPPHDWGKTLKEMDLNLSFDLRVEPLSKYHLDDISMHRLRGGEIVALDDQYTFLQRIPRSHYVLAVGPVPYLYYLHQMRLLDIALIAFIAISLAFPVFIWMRPHWQDMLKLEAAAQRFGDGHLNERIHFDEGSSFERLGVAFNQMADNINALIASKKQLIDGIAHELRTPLVRLRYRLEMSDNLSAAESQALNRDISQLEALIEELLTYARLDRPQNELHLSEPDLPLWLSTHLADIQAVTPDKTVRIKTLVQGHYAALDMRLMERVLDNLLNNALRYCHSTVETSLLLSGNRATLIVEDDGPGIAPENREHIFEPFVRLDPSRDRSTGGCGLGLAIVHSIALAMGGTVNCDTSELGGARFSFSWPLWHNIPQFTSA.

The Cytoplasmic portion of the chain corresponds to 1–3 (MKK). Residues 4–24 (LFIQFYLLLFVCFLVMSLLVG) traverse the membrane as a helical segment. Residues 25 to 135 (LVYKFTAERA…PYLYYLHQMR (111 aa)) are Periplasmic-facing. The helical transmembrane segment at 136-156 (LLDIALIAFIAISLAFPVFIW) threads the bilayer. At 157-433 (MRPHWQDMLK…WHNIPQFTSA (277 aa)) the chain is on the cytoplasmic side. One can recognise an HAMP domain in the interval 158-210 (RPHWQDMLKLEAAAQRFGDGHLNERIHFDEGSSFERLGVAFNQMADNINALIA). A Histidine kinase domain is found at 218-425 (GIAHELRTPL…RFSFSWPLWH (208 aa)). His276 is modified (phosphohistidine; by autocatalysis).

In terms of processing, autophosphorylated.

It localises to the cell inner membrane. It catalyses the reaction ATP + protein L-histidine = ADP + protein N-phospho-L-histidine.. Functionally, member of the two-component regulatory system RstB/RstA. RstB functions as a membrane-associated protein kinase that phosphorylates RstA. This chain is Sensor protein RstB (rstB), found in Escherichia coli (strain K12).